Here is a 201-residue protein sequence, read N- to C-terminus: Ras-related protein Rab-1B (201 aa).

Met1 carries the N-acetylmethionine modification. GTP contacts are provided by Ser17, Gly18, Val19, Gly20, Lys21, Ser22, Cys23, Tyr33, Thr34, Glu35, Ser36, Ser39, and Thr40. Mg(2+) is bound at residue Ser22. The Switch 1 motif lies at 30–45 (DDTYTESYISTIGVDF). Mg(2+)-binding residues include Thr40 and Asp63. The switch 2 region; required for interaction with REP1/CHM stretch occupies residues 64-83 (TAGQERFRTVTSSYYRGAHG). Positions 65 to 80 (AGQERFRTVTSSYYRG) match the Switch 2 motif. 7 residues coordinate GTP: Gly66, Asn121, Lys122, Asp124, Ser151, Ala152, and Lys153. Positions 173–201 (MGPGAASGGERPNLKIDSTPVKSASGGCC) are disordered. 2 S-geranylgeranyl cysteine lipidation sites follow: Cys200 and Cys201. Position 201 is a cysteine methyl ester (Cys201).

This sequence belongs to the small GTPase superfamily. Rab family. In terms of assembly, interacts with MICAL1 and MICAL2. Interacts (in GTP-bound form) with MICALCL, MICAL1 and MILCAL3. Interacts with GDI1; the interaction requires the GDP-bound state. Interacts with CHM/REP1; the interaction requires the GDP-bound form and is necessary for prenylation by GGTase II. Interacts with RabGAP TBC1D20. Interacts (in GDP-bound form) with lipid phosphatase MTMR6 (via GRAM domain); the interaction regulates MTMR6 recruitment to the endoplasmic reticulum-Golgi intermediate compartment. Interacts (in GDP-bound form) with lipid phosphatase MTMR7. Mg(2+) is required as a cofactor. Post-translationally, prenylated; by GGTase II, only after interaction of the substrate with Rab escort protein 1 (REP1).

It is found in the cytoplasm. The protein localises to the membrane. It localises to the preautophagosomal structure membrane. The protein resides in the perinuclear region. The catalysed reaction is GTP + H2O = GDP + phosphate + H(+). With respect to regulation, regulated by guanine nucleotide exchange factors (GEFs) which promote the exchange of bound GDP for free GTP. Regulated by GTPase activating proteins (GAPs) including TBC1D20 which increases the GTP hydrolysis activity. Inhibited by GDP dissociation inhibitors (GDIs). Functionally, the small GTPases Rab are key regulators of intracellular membrane trafficking, from the formation of transport vesicles to their fusion with membranes. Rabs cycle between an inactive GDP-bound form and an active GTP-bound form that is able to recruit to membranes different set of downstream effectors directly responsible for vesicle formation, movement, tethering and fusion. Plays a role in the initial events of the autophagic vacuole development which take place at specialized regions of the endoplasmic reticulum. Regulates vesicular transport between the endoplasmic reticulum and successive Golgi compartments. Required to modulate the compacted morphology of the Golgi. Promotes the recruitment of lipid phosphatase MTMR6 to the endoplasmic reticulum-Golgi intermediate compartment. The polypeptide is Ras-related protein Rab-1B (Rab1b) (Rattus norvegicus (Rat)).